A 155-amino-acid polypeptide reads, in one-letter code: MKGSDALIMALRNMAATLGVYDLMEVRVFLERSCRFVQERYRAIYVDAYMSMVVDSVLDLKAGFSGTPEMDDARYSLRDALKRLDEINAPTIVGLTVLYRTYVKGEPLHPPGTPFPGGFEVEKKDGVHYCPVKDKQSDNPEALCDICIARQSPLP.

This sequence belongs to the UPF0305 family.

The chain is UPF0305 protein MTH_811 from Methanothermobacter thermautotrophicus (strain ATCC 29096 / DSM 1053 / JCM 10044 / NBRC 100330 / Delta H) (Methanobacterium thermoautotrophicum).